A 624-amino-acid chain; its full sequence is Carbon monoxide dehydrogenase (624 aa).

Residues Cys-37, Cys-46, Cys-49, Cys-54, and Cys-65 each coordinate [4Fe-4S] cluster. Residues His-256, Cys-292, Cys-336, Cys-444, Cys-475, and Cys-516 each coordinate [Ni-4Fe-5S] cluster.

This sequence belongs to the Ni-containing carbon monoxide dehydrogenase family. In terms of assembly, homodimer. Requires [4Fe-4S] cluster as cofactor. The cofactor is [Ni-4Fe-5S] cluster.

It carries out the reaction CO + 2 oxidized [2Fe-2S]-[ferredoxin] + H2O = 2 reduced [2Fe-2S]-[ferredoxin] + CO2 + 2 H(+). Its function is as follows. CODH oxidizes carbon monoxide coupled, via CooF, to the reduction of a hydrogen cation by a hydrogenase (possibly CooH). In Methanocaldococcus jannaschii (strain ATCC 43067 / DSM 2661 / JAL-1 / JCM 10045 / NBRC 100440) (Methanococcus jannaschii), this protein is Carbon monoxide dehydrogenase (cooS).